Reading from the N-terminus, the 205-residue chain is Large ribosomal subunit protein uL4 (205 aa).

The disordered stretch occupies residues 56-78; the sequence is ISGTTAKPYRQKHTGRARQGSLR.

This sequence belongs to the universal ribosomal protein uL4 family. In terms of assembly, part of the 50S ribosomal subunit.

One of the primary rRNA binding proteins, this protein initially binds near the 5'-end of the 23S rRNA. It is important during the early stages of 50S assembly. It makes multiple contacts with different domains of the 23S rRNA in the assembled 50S subunit and ribosome. In terms of biological role, forms part of the polypeptide exit tunnel. This Ehrlichia canis (strain Jake) protein is Large ribosomal subunit protein uL4.